A 246-amino-acid chain; its full sequence is MGDREQLLQRARLAEQAERYDDMASAMKAVTELNEPLSNEDRNLLSVAYKNVVGARRSSWRVISSIEQKTMADGNEKKLEKVKAYREKIEKELETVCNDVLSLLDKFLIKNCNDFQYESKVFYLKMKGDYYRYLAEVASGEKKNSVVEASEAAYKEAFEISKEQMQPTHPIRLGLALNFSVFYYEIQNAPEQACLLAKQAFDDAIAELDTLNEDSYKDSTLIMQLLRDNLTLWTSDQQDEEAGEGN.

Gly2 carries the N-acetylglycine modification. A phosphoserine mark is found at Ser25 and Ser59.

Belongs to the 14-3-3 family. Homodimer. Interacts with many nuclear hormone receptors and cofactors including AR, ESR1, ESR2, MC2R, NR3C1, NRIP1, PPARBP and THRA. Interacts with ABL1 (phosphorylated form); the interaction retains it in the cytoplasm. Interacts with ARHGEF28 and CDK16. Weakly interacts with CDKN1B. Interacts with GAB2. Interacts with KCNK18 in a phosphorylation-dependent manner. Interacts with SAMSN1. Interacts with the 'Ser-241' phosphorylated form of PDPK1. Interacts with the 'Thr-369' phosphorylated form of DAPK2. Interacts with PI4KB, TBC1D22A and TBC1D22B. Interacts with SLITRK1. Interacts with MEFV. Post-translationally, phosphorylated on Ser-59 by protein kinase C delta type catalytic subunit in a sphingosine-dependent fashion. In terms of tissue distribution, expressed mainly in the brain and present in other tissues albeit at lower levels.

In terms of biological role, adapter protein implicated in the regulation of a large spectrum of both general and specialized signaling pathways. Binds to a large number of partners, usually by recognition of a phosphoserine or phosphothreonine motif. Binding generally results in the modulation of the activity of the binding partner. Negatively regulates the kinase activity of PDPK1. The chain is 14-3-3 protein eta (YWHAH) from Homo sapiens (Human).